We begin with the raw amino-acid sequence, 228 residues long: Phosphoenolpyruvate guanylyltransferase (228 aa).

3 residues coordinate phosphoenolpyruvate: Thr148, Gly164, and Ser167.

It belongs to the CofC family.

It catalyses the reaction phosphoenolpyruvate + GTP + H(+) = enolpyruvoyl-2-diphospho-5'-guanosine + diphosphate. Its pathway is cofactor biosynthesis; coenzyme F420 biosynthesis. Its function is as follows. Guanylyltransferase that catalyzes the activation of phosphoenolpyruvate (PEP) as enolpyruvoyl-2-diphospho-5'-guanosine, via the condensation of PEP with GTP. It is involved in the biosynthesis of coenzyme F420, a hydride carrier cofactor. The sequence is that of Phosphoenolpyruvate guanylyltransferase from Thermomonospora curvata (strain ATCC 19995 / DSM 43183 / JCM 3096 / KCTC 9072 / NBRC 15933 / NCIMB 10081 / Henssen B9).